We begin with the raw amino-acid sequence, 47 residues long: Putative glycosylation-dependent cell adhesion molecule 1 (47 aa).

The first 18 residues, 1 to 18 (MKFFMVLLPASLASTSLA), serve as a signal peptide directing secretion.

It belongs to the PP3/GlyCAM-1 family. Expressed in cells harvested from milk of lactating women. Not found in other tissues.

The chain is Putative glycosylation-dependent cell adhesion molecule 1 (GLYCAM1) from Homo sapiens (Human).